Reading from the N-terminus, the 200-residue chain is Superoxide dismutase [Mn] (200 aa).

4 residues coordinate Mn(2+): H27, H77, D160, and H164.

It belongs to the iron/manganese superoxide dismutase family. As to quaternary structure, homodimer. Mn(2+) is required as a cofactor.

It catalyses the reaction 2 superoxide + 2 H(+) = H2O2 + O2. Functionally, destroys superoxide anion radicals which are normally produced within the cells and which are toxic to biological systems. In Rhizobium meliloti (strain 1021) (Ensifer meliloti), this protein is Superoxide dismutase [Mn] (sodB).